The chain runs to 380 residues: Queuine tRNA-ribosyltransferase (380 aa).

Aspartate 96 acts as the Proton acceptor in catalysis. Substrate is bound by residues 96 to 100 (DSGGF), aspartate 150, glutamine 193, and glycine 220. Residues 251–257 (GVGAPDS) form an RNA binding region. The Nucleophile role is filled by aspartate 270. Residues 275-279 (TRIAR) form an RNA binding; important for wobble base 34 recognition region. Positions 308, 310, 313, and 339 each coordinate Zn(2+).

It belongs to the queuine tRNA-ribosyltransferase family. Homodimer. Within each dimer, one monomer is responsible for RNA recognition and catalysis, while the other monomer binds to the replacement base PreQ1. Requires Zn(2+) as cofactor.

It carries out the reaction 7-aminomethyl-7-carbaguanine + guanosine(34) in tRNA = 7-aminomethyl-7-carbaguanosine(34) in tRNA + guanine. It functions in the pathway tRNA modification; tRNA-queuosine biosynthesis. In terms of biological role, catalyzes the base-exchange of a guanine (G) residue with the queuine precursor 7-aminomethyl-7-deazaguanine (PreQ1) at position 34 (anticodon wobble position) in tRNAs with GU(N) anticodons (tRNA-Asp, -Asn, -His and -Tyr). Catalysis occurs through a double-displacement mechanism. The nucleophile active site attacks the C1' of nucleotide 34 to detach the guanine base from the RNA, forming a covalent enzyme-RNA intermediate. The proton acceptor active site deprotonates the incoming PreQ1, allowing a nucleophilic attack on the C1' of the ribose to form the product. After dissociation, two additional enzymatic reactions on the tRNA convert PreQ1 to queuine (Q), resulting in the hypermodified nucleoside queuosine (7-(((4,5-cis-dihydroxy-2-cyclopenten-1-yl)amino)methyl)-7-deazaguanosine). The sequence is that of Queuine tRNA-ribosyltransferase from Streptococcus thermophilus (strain ATCC BAA-250 / LMG 18311).